A 675-amino-acid polypeptide reads, in one-letter code: Protein brown (675 aa).

Residues 1 to 419 (MQESGGSSGQ…TEDLRNIRSG (419 aa)) lie on the Cytoplasmic side of the membrane. In terms of domain architecture, ABC transporter spans 34–261 (YSFWNECRKK…EVVAESHESL (228 aa)). Position 66–73 (66–73 (GGSGAGKT)) interacts with ATP. Residues 229–249 (EDSFETPSGESSASGSGSKSI) are disordered. Over residues 236 to 248 (SGESSASGSGSKS) the composition is skewed to low complexity. The chain crosses the membrane as a helical span at residues 420 to 440 (LIAFGFFMITAVTLSLMYSGI). Topologically, residues 441–460 (GGLTQRTVQDVGGSIFMLSN) are extracellular. A helical membrane pass occupies residues 461 to 481 (EMIFTFSYGVTYIFPAALPII). Residues 482–497 (RREVGEGTYSLSAYYV) are Cytoplasmic-facing. The helical transmembrane segment at 498-518 (ALVLSFVPVAFFKGYVFLSVI) threads the bilayer. The Extracellular portion of the chain corresponds to 519-531 (YASIYYTRGFLLY). A helical membrane pass occupies residues 532–552 (LSMGFLMSLSAVAAVGYGVFL). Over 553–568 (SSLFESDKMASECAAP) the chain is Cytoplasmic. The helical transmembrane segment at 569–589 (FDLIFLIFGGTYMNVDTVPGL) threads the bilayer. Topologically, residues 590-644 (KYLSLFFYSNEALMYKFWIDIDNIDCPVNEDHPCIKTGVEVLQQGSYRNADYTYW) are extracellular. Residues 645–665 (LDCFSLVVVAVIFHIVSFGLV) traverse the membrane as a helical segment. At 666 to 675 (RRYIHRSGYY) the chain is on the cytoplasmic side.

This sequence belongs to the ABC transporter superfamily. ABCG family. Eye pigment precursor importer (TC 3.A.1.204) subfamily. May form a heterodimer with w/white.

It localises to the membrane. It carries out the reaction guanine(out) + ATP + H2O = guanine(in) + ADP + phosphate + H(+). The enzyme catalyses riboflavin(in) + ATP + H2O = riboflavin(out) + ADP + phosphate + H(+). It catalyses the reaction (6S)-5,6,7,8-tetrahydrofolate(out) + ATP + H2O = (6S)-5,6,7,8-tetrahydrofolate(in) + ADP + phosphate + H(+). In terms of biological role, ATP-dependent transporter of the ATP-binding cassette (ABC) family which transports various molecules including bioamines, neurotransmitters and metabolic intermediates. In the eye and probably in association with w/white, required for the transport of the eye red pigment precursor, guanine, into pigment cell granules. In Malpighian tubules, involved in guanine uptake. Probably in association with w/white, involved in aging-induced intestinal stem cell proliferation in the midgut by regulating tetrahydrofolate transport. This is Protein brown from Drosophila melanogaster (Fruit fly).